The chain runs to 424 residues: UDP-N-acetylglucosamine 1-carboxyvinyltransferase (424 aa).

K22–N23 contacts phosphoenolpyruvate. A UDP-N-acetyl-alpha-D-glucosamine-binding site is contributed by R93. C117 serves as the catalytic Proton donor. The residue at position 117 (C117) is a 2-(S-cysteinyl)pyruvic acid O-phosphothioketal. Residues R122–L126, D307, and I329 contribute to the UDP-N-acetyl-alpha-D-glucosamine site.

Belongs to the EPSP synthase family. MurA subfamily.

It localises to the cytoplasm. It carries out the reaction phosphoenolpyruvate + UDP-N-acetyl-alpha-D-glucosamine = UDP-N-acetyl-3-O-(1-carboxyvinyl)-alpha-D-glucosamine + phosphate. It functions in the pathway cell wall biogenesis; peptidoglycan biosynthesis. Cell wall formation. Adds enolpyruvyl to UDP-N-acetylglucosamine. This Chlorobaculum parvum (strain DSM 263 / NCIMB 8327) (Chlorobium vibrioforme subsp. thiosulfatophilum) protein is UDP-N-acetylglucosamine 1-carboxyvinyltransferase.